Reading from the N-terminus, the 367-residue chain is uncharacterized protein (367 aa).

4 consecutive transmembrane segments (helical) span residues 18 to 38 (ILAL…GILG), 239 to 259 (VSYF…IGIG), 296 to 316 (ILGV…GYLI), and 329 to 349 (AIFY…ISAL).

The protein belongs to the ABC-4 integral membrane protein family.

The protein localises to the cell membrane. This is an uncharacterized protein from Methanocaldococcus jannaschii (strain ATCC 43067 / DSM 2661 / JAL-1 / JCM 10045 / NBRC 100440) (Methanococcus jannaschii).